Reading from the N-terminus, the 652-residue chain is Fimbrin-4 (652 aa).

Calponin-homology (CH) domains are found at residues 116 to 233 (ESEK…KIQL), 261 to 364 (LAPE…HHRN), 388 to 494 (SREE…RYTM), and 509 to 617 (DITE…NWSL). 2 actin-binding regions span residues 116–364 (ESEK…HHRN) and 388–617 (SREE…NWSL). Positions 623–652 (TESTVSDDTDVSSVTEEISNLSTDDGSSDV) are disordered. A compositionally biased stretch (polar residues) spans 640 to 652 (ISNLSTDDGSSDV).

As to quaternary structure, interacts with F-actin.

The protein localises to the cytoplasm. It is found in the cytoskeleton. Cross-links actin filaments (F-actin). Stabilizes and prevents F-actin depolymerization mediated by profilin. May regulate actin cytoarchitecture, cell cycle, cell division, cell elongation and cytoplasmic tractus. The protein is Fimbrin-4 of Arabidopsis thaliana (Mouse-ear cress).